The sequence spans 292 residues: GTP cyclohydrolase FolE2 (292 aa).

Belongs to the GTP cyclohydrolase IV family.

It carries out the reaction GTP + H2O = 7,8-dihydroneopterin 3'-triphosphate + formate + H(+). Its pathway is cofactor biosynthesis; 7,8-dihydroneopterin triphosphate biosynthesis; 7,8-dihydroneopterin triphosphate from GTP: step 1/1. Its function is as follows. Converts GTP to 7,8-dihydroneopterin triphosphate. In Staphylococcus carnosus (strain TM300), this protein is GTP cyclohydrolase FolE2.